Here is a 370-residue protein sequence, read N- to C-terminus: Ribosomal RNA small subunit methyltransferase H (370 aa).

Residues 85–87, D104, Y131, D152, and Q159 each bind S-adenosyl-L-methionine; that span reads GGH. Basic and acidic residues-rich tracts occupy residues 332-345 and 353-370; these read GAER…ERNP and RALE…RDAR. The disordered stretch occupies residues 332–370; sequence GAERATPEEIERNPRSAPVRLRALEKVAGRPTTARRDAR.

Belongs to the methyltransferase superfamily. RsmH family.

It localises to the cytoplasm. It catalyses the reaction cytidine(1402) in 16S rRNA + S-adenosyl-L-methionine = N(4)-methylcytidine(1402) in 16S rRNA + S-adenosyl-L-homocysteine + H(+). Functionally, specifically methylates the N4 position of cytidine in position 1402 (C1402) of 16S rRNA. This Mycobacterium sp. (strain KMS) protein is Ribosomal RNA small subunit methyltransferase H.